The primary structure comprises 304 residues: Coenzyme PQQ synthesis protein B (304 aa).

It belongs to the PqqB family.

The protein operates within cofactor biosynthesis; pyrroloquinoline quinone biosynthesis. Functionally, may be involved in the transport of PQQ or its precursor to the periplasm. The polypeptide is Coenzyme PQQ synthesis protein B (Azoarcus sp. (strain BH72)).